Reading from the N-terminus, the 1958-residue chain is Echinoderm microtubule-associated protein-like 6 (1958 aa).

WD repeat units follow at residues 59–100 (GHND…TVSI), 104–145 (VHTH…LLAS), 148–187 (GHSD…LTAK), 195–233 (GDLQ…RTIQ), 235–273 (AHSA…TKID), 280–321 (GYKG…LILQ), 323–362 (HCEG…LIAR), 364–403 (NMEE…EVVH), 406–445 (DRKE…KKIG), and 561–601 (GHSA…VSNG). The segment at 604-627 (ETTPQEGGADSYSEESDSDFSDVP) is disordered. The span at 615 to 627 (YSEESDSDFSDVP) shows a compositional bias: acidic residues. 10 WD repeats span residues 725-766 (GHDD…CLSL), 770-811 (HHQR…KIAT), 814-853 (GHKD…FTSK), 861-900 (GKLE…KTVK), 901-940 (AHDG…KTYA), 996-1035 (HMEG…RMLA), 1038-1077 (KLKK…DMLS), 1080-1120 (HRKE…RVGI), 1191-1230 (SDVT…QHAR), and 1236-1276 (GHSA…TQES). Basic and acidic residues predominate over residues 1322-1337 (KPHQQLKEVSMEERPP). The segment at 1322-1352 (KPHQQLKEVSMEERPPVSRAAPQPEKLQKNN) is disordered. 10 WD repeats span residues 1412–1456 (EHTD…TLSM), 1460–1501 (FHTK…KVAS), 1504–1543 (GHLE…LLYK), 1553–1591 (AKMQ…RLVA), 1593–1638 (AHTG…CRAF), 1685–1724 (HMEG…LLNK), 1726–1767 (NLGH…GKKR), 1768–1807 (DRKS…SLNR), 1880–1919 (ADKA…KFAK), and 1925–1958 (GHSA…WRCL).

It belongs to the WD repeat EMAP family.

The protein resides in the cytoplasm. The protein localises to the cytoskeleton. Functionally, may modify the assembly dynamics of microtubules, such that microtubules are slightly longer, but more dynamic. The protein is Echinoderm microtubule-associated protein-like 6 (Eml6) of Mus musculus (Mouse).